The chain runs to 348 residues: Mamu class I histocompatibility antigen, alpha chain F (348 aa).

An N-terminal signal peptide occupies residues 1 to 21; sequence MAPRTLLLVLSGALALTETWA. Residues 22–113 are alpha-1; that stretch reads GSHSLRYFST…LLLRYNQSEA (92 aa). Residues 22 to 307 are Extracellular-facing; it reads GSHSLRYFST…ESSSQPTIPI (286 aa). N-linked (GlcNAc...) asparagine glycosylation occurs at asparagine 109. Positions 114–205 are alpha-2; sequence GSHTLQGMNG…ENGKETLQRA (92 aa). Disulfide bonds link cysteine 124–cysteine 187 and cysteine 226–cysteine 282. The alpha-3 stretch occupies residues 206–297; sequence DPPKAHVAHH…GLPQPLTLRW (92 aa). Residues 208–296 form the Ig-like C1-type domain; it reads PKAHVAHHPI…EGLPQPLTLR (89 aa). Positions 298–307 are connecting peptide; that stretch reads ESSSQPTIPI. A helical membrane pass occupies residues 308–331; it reads VGIVAGLAVLAVVVTGAVVAAVMW. Topologically, residues 332-348 are cytoplasmic; that stretch reads RRKSSDRNRGSYSQPTM.

Belongs to the MHC class I family. In terms of assembly, heterodimer of an alpha chain and a beta chain (beta-2-microglobulin).

Its subcellular location is the membrane. Functionally, involved in the presentation of foreign antigens to the immune system. The sequence is that of Mamu class I histocompatibility antigen, alpha chain F (Mamu-F) from Macaca mulatta (Rhesus macaque).